The sequence spans 518 residues: Arginyl-tRNA--protein transferase 1 (518 aa).

Basic and acidic residues predominate over residues 149–165; the sequence is ESLQSEGKNSKKEEPHE. The interval 149–207 is disordered; it reads ESLQSEGKNSKKEEPHELLQSQDSVGEKLGSGEPSHSVKVHTVPKPGKGADLSKPPCRK. Residue Ser169 is modified to Phosphoserine.

It belongs to the R-transferase family. In terms of assembly, monomer. Interacts with LIAT1; LIAT1 is not a substrate of ATE1, the interaction takes place in the cytoplasm and seems to increase ATE1 arginyltransferase activity.

It is found in the nucleus. The protein resides in the cytoplasm. The catalysed reaction is an N-terminal L-alpha-aminoacyl-[protein] + L-arginyl-tRNA(Arg) = an N-terminal L-arginyl-L-aminoacyl-[protein] + tRNA(Arg) + H(+). Functionally, involved in the post-translational conjugation of arginine to the N-terminal aspartate or glutamate of a protein. This arginylation is required for degradation of the protein via the ubiquitin pathway. Does not arginylate cysteine residues. The polypeptide is Arginyl-tRNA--protein transferase 1 (ATE1) (Macaca fascicularis (Crab-eating macaque)).